Reading from the N-terminus, the 116-residue chain is Protein Rev (116 aa).

At Ser-5 the chain carries Phosphoserine; by host CK2. Residues 18-26 (IIKILYQSN) are homomultimerization. The disordered stretch occupies residues 26–48 (NPYSKPNGSRQARRNRRRRWRAR). The short motif at 34–50 (SRQARRNRRRRWRARQN) is the Nuclear localization signal and RNA-binding (RRE) element. Over residues 36–47 (QARRNRRRRWRA) the composition is skewed to basic residues. The short motif at 73–84 (LQLPPIERLRLD) is the Nuclear export signal and binding to XPO1 element. Ser-92 is subject to Phosphoserine; by host.

Belongs to the HIV-1 REV protein family. As to quaternary structure, homomultimer; when bound to the RRE. Multimeric assembly is essential for activity and may involve XPO1. Binds to human KPNB1, XPO1, TNPO1, RANBP5 and IPO7. Interacts with the viral Integrase. Interacts with human KHDRBS1. Interacts with human NAP1; this interaction decreases Rev multimerization and stimulates its activity. Interacts with human DEAD-box helicases DDX3 and DDX24; these interactions may serve for viral RNA export to the cytoplasm and packaging, respectively. Interacts with human PSIP1; this interaction may inhibit HIV-1 DNA integration by promoting dissociation of the Integrase-LEDGF/p75 complex. Post-translationally, asymmetrically arginine dimethylated at one site by host PRMT6. Methylation impairs the RNA-binding activity and export of viral RNA from the nucleus to the cytoplasm. In terms of processing, phosphorylated by protein kinase CK2. Presence of, and maybe binding to the N-terminus of the regulatory beta subunit of CK2 is necessary for CK2-mediated Rev's phosphorylation.

The protein resides in the host nucleus. Its subcellular location is the host nucleolus. The protein localises to the host cytoplasm. In terms of biological role, escorts unspliced or incompletely spliced viral pre-mRNAs (late transcripts) out of the nucleus of infected cells. These pre-mRNAs carry a recognition sequence called Rev responsive element (RRE) located in the env gene, that is not present in fully spliced viral mRNAs (early transcripts). This function is essential since most viral proteins are translated from unspliced or partially spliced pre-mRNAs which cannot exit the nucleus by the pathway used by fully processed cellular mRNAs. Rev itself is translated from a fully spliced mRNA that readily exits the nucleus. Rev's nuclear localization signal (NLS) binds directly to KPNB1/Importin beta-1 without previous binding to KPNA1/Importin alpha-1. KPNB1 binds to the GDP bound form of RAN (Ran-GDP) and targets Rev to the nucleus. In the nucleus, the conversion from Ran-GDP to Ran-GTP dissociates Rev from KPNB1 and allows Rev's binding to the RRE in viral pre-mRNAs. Rev multimerization on the RRE via cooperative assembly exposes its nuclear export signal (NES) to the surface. Rev can then form a complex with XPO1/CRM1 and Ran-GTP, leading to nuclear export of the complex. Conversion from Ran-GTP to Ran-GDP mediates dissociation of the Rev/RRE/XPO1/RAN complex, so that Rev can return to the nucleus for a subsequent round of export. Beside KPNB1, also seems to interact with TNPO1/Transportin-1, RANBP5/IPO5 and IPO7/RANBP7 for nuclear import. The nucleoporin-like HRB/RIP is an essential cofactor that probably indirectly interacts with Rev to release HIV RNAs from the perinuclear region to the cytoplasm. The protein is Protein Rev of Homo sapiens (Human).